A 154-amino-acid chain; its full sequence is UPF0260 protein NTHI1811 (154 aa).

It belongs to the UPF0260 family.

The chain is UPF0260 protein NTHI1811 from Haemophilus influenzae (strain 86-028NP).